We begin with the raw amino-acid sequence, 281 residues long: Phosphatidylglycerol--prolipoprotein diacylglyceryl transferase (281 aa).

3 helical membrane passes run 11–31 (IIFTIGPVSARWYGFMYVISF), 57–77 (LLYSIFLGSCIGGRIGYIIFY), and 89–109 (VFYIWEGGMSFHGGLIGAIIV). Arginine 140 contacts a 1,2-diacyl-sn-glycero-3-phospho-(1'-sn-glycerol). Helical transmembrane passes span 194–214 (PTQLYEFFLEGILLFFIIYFF), 222–242 (GSISGLFLIFYGLFRIFIEFF), and 255–275 (IITMGQILSLPMIIAGLIIMY).

This sequence belongs to the Lgt family.

It is found in the cell inner membrane. The enzyme catalyses L-cysteinyl-[prolipoprotein] + a 1,2-diacyl-sn-glycero-3-phospho-(1'-sn-glycerol) = an S-1,2-diacyl-sn-glyceryl-L-cysteinyl-[prolipoprotein] + sn-glycerol 1-phosphate + H(+). The protein operates within protein modification; lipoprotein biosynthesis (diacylglyceryl transfer). Catalyzes the transfer of the diacylglyceryl group from phosphatidylglycerol to the sulfhydryl group of the N-terminal cysteine of a prolipoprotein, the first step in the formation of mature lipoproteins. In Buchnera aphidicola subsp. Acyrthosiphon pisum (strain APS) (Acyrthosiphon pisum symbiotic bacterium), this protein is Phosphatidylglycerol--prolipoprotein diacylglyceryl transferase.